The sequence spans 617 residues: BPI fold-containing family B member 4 (617 aa).

An N-terminal signal peptide occupies residues 1–17 (MWTAWCVAALSVAAVCG). Positions 124-149 (RPSDSAYHRGPGRYRSAADPSSAGRL) are disordered. An N-linked (GlcNAc...) asparagine glycan is attached at asparagine 275. A disulfide bridge connects residues cysteine 297 and cysteine 334.

It belongs to the BPI/LBP/Plunc superfamily. BPI/LBP family. In terms of tissue distribution, highly expressed in olfactory mucosa but undetectable in thymus, kidney, lung, brain, spleen and liver.

Its subcellular location is the secreted. It is found in the cytoplasm. May have the capacity to recognize and bind specific classes of odorants. May act as a carrier molecule, transporting odorants across the mucus layer to access receptor sites. May serve as a primary defense mechanism by recognizing and removing potentially harmful odorants or pathogenic microorganisms from the mucosa or clearing excess odorant from mucus to enable new odorant stimuli to be received. This chain is BPI fold-containing family B member 4 (Bpifb4), found in Rattus norvegicus (Rat).